The sequence spans 152 residues: Transcriptional regulator MraZ (152 aa).

2 consecutive SpoVT-AbrB domains span residues Ala5–Ala52 and Ala81–Thr124.

This sequence belongs to the MraZ family. In terms of assembly, forms oligomers.

It is found in the cytoplasm. The protein resides in the nucleoid. In terms of biological role, negatively regulates its own expression and that of the subsequent genes in the proximal part of the division and cell wall (dcw) gene cluster. Acts by binding directly to DNA. May also regulate the expression of genes outside the dcw cluster. This is Transcriptional regulator MraZ from Sodalis glossinidius (strain morsitans).